The primary structure comprises 475 residues: tRNA-dihydrouridine(16/17) synthase [NAD(P)(+)]-like (475 aa).

FMN-binding positions include 23–25 (PMV) and Gln-79. The active-site Proton donor is Cys-108. FMN contacts are provided by residues Lys-147, His-175, 208–210 (NGN), and 232–233 (AE). The segment at 343–388 (GPREGSKENSGGRSKRALEEEEGSMEGLSKNKLKKQLRNPHKTFDP) is disordered. Residues 373-383 (NKLKKQLRNPH) are compositionally biased toward basic residues.

The protein belongs to the Dus family. Dus1 subfamily. Requires FMN as cofactor.

The protein localises to the cytoplasm. It is found in the nucleus. The enzyme catalyses 5,6-dihydrouridine(16) in tRNA + NADP(+) = uridine(16) in tRNA + NADPH + H(+). It carries out the reaction 5,6-dihydrouridine(16) in tRNA + NAD(+) = uridine(16) in tRNA + NADH + H(+). It catalyses the reaction 5,6-dihydrouridine(17) in tRNA + NAD(+) = uridine(17) in tRNA + NADH + H(+). The catalysed reaction is 5,6-dihydrouridine(17) in tRNA + NADP(+) = uridine(17) in tRNA + NADPH + H(+). Catalyzes the synthesis of dihydrouridine, a modified base found in the D-loop of most tRNAs. Specifically modifies U16 and U17 in cytoplasmic tRNAs. Affects the level of some mature tRNA and thereby the total cellular translation. This Mus musculus (Mouse) protein is tRNA-dihydrouridine(16/17) synthase [NAD(P)(+)]-like (Dus1l).